A 793-amino-acid chain; its full sequence is DnaJ homolog subfamily C member 10 (793 aa).

Positions 1–32 (MGVWLNRDEFIRDVKRISLCLLVLYVVIVVGT) are cleaved as a signal peptide. One can recognise a J domain in the interval 35 to 100 (NFYSLLGVSK…DLRKKYDKYG (66 aa)). Positions 130–232 (EIITLERREF…ESLVSFAMQH (103 aa)) constitute a Thioredoxin 1 domain. Cysteine 158 and cysteine 161 are joined by a disulfide. Trxb regions lie at residues 235–350 (TTVT…LPDF) and 348–463 (PDFE…PQNF). 3 Thioredoxin domains span residues 454–553 (HVTT…IEDL), 557–665 (SVVS…SWGL), and 671–776 (ASID…ALIY). An intrachain disulfide couples cysteine 480 to cysteine 483. A glycan (N-linked (GlcNAc...) asparagine) is linked at asparagine 530. Intrachain disulfides connect cysteine 588/cysteine 591 and cysteine 700/cysteine 703. Positions 790–793 (KDEL) match the Prevents secretion from ER motif.

In terms of assembly, interacts with HSPA5 (via its J domain). Interacts with EDEM1.

The protein resides in the endoplasmic reticulum lumen. In terms of biological role, endoplasmic reticulum disulfide reductase involved both in the correct folding of proteins and degradation of misfolded proteins. Required for efficient folding of proteins in the endoplasmic reticulum by catalyzing the removal of non-native disulfide bonds formed during the folding of proteins, such as LDLR. Also involved in endoplasmic reticulum-associated degradation (ERAD) by reducing incorrect disulfide bonds in misfolded glycoproteins recognized by EDEM1. Interaction with HSPA5 is required its activity, not for the disulfide reductase activity, but to facilitate the release of DNAJC10 from its substrate. Promotes apoptotic signaling pathway in response to endoplasmic reticulum stress. This Rattus norvegicus (Rat) protein is DnaJ homolog subfamily C member 10 (Dnajc10).